The primary structure comprises 252 residues: Neurexophilin-3 (252 aa).

The first 22 residues, 1 to 22 (MQLTRCCFVFLVQGSLYLVICG), serve as a signal peptide directing secretion. Positions 23-75 (QDDGPPGSEDPERDDHEGQPRPRVPRKRGHISPKSRPMANSTLLGLLAPPGEA) are II. The disordered stretch occupies residues 27-58 (PPGSEDPERDDHEGQPRPRVPRKRGHISPKSR). A compositionally biased stretch (basic residues) spans 45–55 (RVPRKRGHISP). N-linked (GlcNAc...) asparagine glycans are attached at residues Asn62, Asn127, Asn137, and Asn143. The III stretch occupies residues 76–157 (WGILGQPPNR…LVPPSKAVEF (82 aa)). The IV (linker domain) stretch occupies residues 158–166 (HQEQQIFIE). The interval 167–252 (AKASKIFNCR…HSDTPYYPSG (86 aa)) is v (Cys-rich).

The protein belongs to the neurexophilin family. In terms of processing, may be proteolytically processed at the boundary between the N-terminal non-conserved and the central conserved domain in neuron-like cells. As to expression, highest level in brain.

The protein resides in the secreted. May be signaling molecules that resemble neuropeptides. Ligand for alpha-neurexins. This chain is Neurexophilin-3 (NXPH3), found in Homo sapiens (Human).